A 174-amino-acid polypeptide reads, in one-letter code: MSRVAKKPIDLGKVELNVQNDNVTAKGPKGTLSLAKPAGIAINVENGVATLSTESVDLIPLTGTVRAILSNMVKGVSEGFERKLELVGVGYRAAMQGKDLSLSLGFSHPIVFVAPEGITITTPTQTEILVQGADKQVVGEVAAKIRAFRKPEPYKGKGVKYSDEVIIRKEAKKA.

It belongs to the universal ribosomal protein uL6 family. In terms of assembly, part of the 50S ribosomal subunit.

In terms of biological role, this protein binds to the 23S rRNA, and is important in its secondary structure. It is located near the subunit interface in the base of the L7/L12 stalk, and near the tRNA binding site of the peptidyltransferase center. The protein is Large ribosomal subunit protein uL6 of Stenotrophomonas maltophilia (strain R551-3).